Here is a 61-residue protein sequence, read N- to C-terminus: Large ribosomal subunit protein uL29 (61 aa).

Belongs to the universal ribosomal protein uL29 family.

The polypeptide is Large ribosomal subunit protein uL29 (Xanthomonas euvesicatoria pv. vesicatoria (strain 85-10) (Xanthomonas campestris pv. vesicatoria)).